The following is a 100-amino-acid chain: Apolipoprotein C-II (100 aa).

A signal peptide spans 1–22 (MGSRFLLALFLILLVLGCEVQA). Residues 66 to 74 (SVDEKLRDM) are lipid binding. The segment at 78 to 100 (SSAAMTTYASIFTDQILTLLKGE) is lipoprotein lipase cofactor.

Belongs to the apolipoprotein C2 family. In terms of processing, proapolipoprotein C-II is synthesized as a sialic acid containing glycoprotein which is subsequently desialylated prior to its proteolytic processing. Post-translationally, proapolipoprotein C-II, the major form found in plasma undergoes proteolytic cleavage of its N-terminal hexapeptide to generate the mature form apolipoprotein C-II, which occurs as the minor form in plasma.

The protein resides in the secreted. Functionally, component of chylomicrons, very low-density lipoproteins (VLDL), low-density lipoproteins (LDL), and high-density lipoproteins (HDL) in plasma. Plays an important role in lipoprotein metabolism as an activator of lipoprotein lipase. This chain is Apolipoprotein C-II (APOC2), found in Microtus ochrogaster (Prairie vole).